The sequence spans 57 residues: MKYFVVLVVLALILAISVGPSDAVFIDILDKVENAIHNAAQVGIGFAKPFEKLINPK.

Positions 1 to 23 (MKYFVVLVVLALILAISVGPSDA) are cleaved as a signal peptide.

This sequence belongs to the andropin family. Ejaculatory duct of adult males.

It localises to the secreted. In terms of biological role, male-specific peptide with moderate activity against Gram-positive bacteria. The polypeptide is Andropin (Anp) (Drosophila melanogaster (Fruit fly)).